The following is a 206-amino-acid chain: ATP synthase subunit b (206 aa).

Residues 14 to 34 traverse the membrane as a helical segment; it reads VMMPAAVCAAVIGLSALGFAA.

The protein belongs to the ATPase B chain family. F-type ATPases have 2 components, F(1) - the catalytic core - and F(0) - the membrane proton channel. F(1) has five subunits: alpha(3), beta(3), gamma(1), delta(1), epsilon(1). F(0) has three main subunits: a(1), b(2) and c(10-14). The alpha and beta chains form an alternating ring which encloses part of the gamma chain. F(1) is attached to F(0) by a central stalk formed by the gamma and epsilon chains, while a peripheral stalk is formed by the delta and b chains.

The protein resides in the cell inner membrane. In terms of biological role, f(1)F(0) ATP synthase produces ATP from ADP in the presence of a proton or sodium gradient. F-type ATPases consist of two structural domains, F(1) containing the extramembraneous catalytic core and F(0) containing the membrane proton channel, linked together by a central stalk and a peripheral stalk. During catalysis, ATP synthesis in the catalytic domain of F(1) is coupled via a rotary mechanism of the central stalk subunits to proton translocation. Component of the F(0) channel, it forms part of the peripheral stalk, linking F(1) to F(0). The sequence is that of ATP synthase subunit b from Geobacter metallireducens (strain ATCC 53774 / DSM 7210 / GS-15).